The chain runs to 154 residues: NADPH-dependent 7-cyano-7-deazaguanine reductase (154 aa).

The span at 1–21 shows a compositional bias: polar residues; sequence MPNTDVSSLSMLGHQTETASS. The interval 1–26 is disordered; it reads MPNTDVSSLSMLGHQTETASSPEEAV. The active-site Thioimide intermediate is the C52. Catalysis depends on D59, which acts as the Proton donor. Residues 74-76 and 93-94 contribute to the substrate site; these read VES and HE.

It belongs to the GTP cyclohydrolase I family. QueF type 1 subfamily.

The protein localises to the cytoplasm. It catalyses the reaction 7-aminomethyl-7-carbaguanine + 2 NADP(+) = 7-cyano-7-deazaguanine + 2 NADPH + 3 H(+). It functions in the pathway tRNA modification; tRNA-queuosine biosynthesis. Its function is as follows. Catalyzes the NADPH-dependent reduction of 7-cyano-7-deazaguanine (preQ0) to 7-aminomethyl-7-deazaguanine (preQ1). The polypeptide is NADPH-dependent 7-cyano-7-deazaguanine reductase (Rhizobium etli (strain ATCC 51251 / DSM 11541 / JCM 21823 / NBRC 15573 / CFN 42)).